Consider the following 337-residue polypeptide: Aspartate carbamoyltransferase catalytic subunit (337 aa).

Carbamoyl phosphate-binding residues include Arg-59 and Thr-60. An L-aspartate-binding site is contributed by Lys-87. 3 residues coordinate carbamoyl phosphate: Arg-109, His-142, and Gln-145. 2 residues coordinate L-aspartate: Arg-182 and Arg-253. The carbamoyl phosphate site is built by Gly-294 and Pro-295.

This sequence belongs to the aspartate/ornithine carbamoyltransferase superfamily. ATCase family. As to quaternary structure, heterododecamer (2C3:3R2) of six catalytic PyrB chains organized as two trimers (C3), and six regulatory PyrI chains organized as three dimers (R2).

The catalysed reaction is carbamoyl phosphate + L-aspartate = N-carbamoyl-L-aspartate + phosphate + H(+). It participates in pyrimidine metabolism; UMP biosynthesis via de novo pathway; (S)-dihydroorotate from bicarbonate: step 2/3. Its function is as follows. Catalyzes the condensation of carbamoyl phosphate and aspartate to form carbamoyl aspartate and inorganic phosphate, the committed step in the de novo pyrimidine nucleotide biosynthesis pathway. The sequence is that of Aspartate carbamoyltransferase catalytic subunit from Prochlorococcus marinus (strain MIT 9211).